The chain runs to 207 residues: ATP phosphoribosyltransferase (207 aa).

Belongs to the ATP phosphoribosyltransferase family. Short subfamily. As to quaternary structure, heteromultimer composed of HisG and HisZ subunits.

The protein localises to the cytoplasm. The enzyme catalyses 1-(5-phospho-beta-D-ribosyl)-ATP + diphosphate = 5-phospho-alpha-D-ribose 1-diphosphate + ATP. Its pathway is amino-acid biosynthesis; L-histidine biosynthesis; L-histidine from 5-phospho-alpha-D-ribose 1-diphosphate: step 1/9. Its function is as follows. Catalyzes the condensation of ATP and 5-phosphoribose 1-diphosphate to form N'-(5'-phosphoribosyl)-ATP (PR-ATP). Has a crucial role in the pathway because the rate of histidine biosynthesis seems to be controlled primarily by regulation of HisG enzymatic activity. This chain is ATP phosphoribosyltransferase, found in Dictyoglomus thermophilum (strain ATCC 35947 / DSM 3960 / H-6-12).